Here is a 31-residue protein sequence, read N- to C-terminus: Photosystem II reaction center protein T (31 aa).

Residues 3–23 (AFTYTLLMTLGVVTLFFAVAF) form a helical membrane-spanning segment.

It belongs to the PsbT family. In terms of assembly, PSII is composed of 1 copy each of membrane proteins PsbA, PsbB, PsbC, PsbD, PsbE, PsbF, PsbH, PsbI, PsbJ, PsbK, PsbL, PsbM, PsbT, PsbX, PsbY, Psb30/Ycf12, peripheral proteins PsbO, CyanoQ (PsbQ), PsbU, PsbV and a large number of cofactors. It forms dimeric complexes.

The protein resides in the cellular thylakoid membrane. In terms of biological role, found at the monomer-monomer interface of the photosystem II (PS II) dimer, plays a role in assembly and dimerization of PSII. PSII is a light-driven water plastoquinone oxidoreductase, using light energy to abstract electrons from H(2)O, generating a proton gradient subsequently used for ATP formation. The chain is Photosystem II reaction center protein T from Prochlorococcus marinus (strain SARG / CCMP1375 / SS120).